We begin with the raw amino-acid sequence, 1877 residues long: Protein TIC 214 (1877 aa).

6 helical membrane-spanning segments follow: residues Ile18–Gly38, Phe64–Leu84, Pro87–His107, Leu124–Leu144, Val172–Ile192, and Ile221–Ile241. 3 disordered regions span residues Leu246 to Lys313, Asp644 to Arg695, and Pro774 to Glu795. 3 stretches are compositionally biased toward acidic residues: residues Glu251 to Thr268, Gly281 to Glu304, and Asp645 to Glu659. The span at Thr685–Arg695 shows a compositional bias: basic and acidic residues.

It belongs to the TIC214 family. Part of the Tic complex.

It is found in the plastid. The protein localises to the chloroplast inner membrane. Its function is as follows. Involved in protein precursor import into chloroplasts. May be part of an intermediate translocation complex acting as a protein-conducting channel at the inner envelope. The protein is Protein TIC 214 of Chloranthus spicatus (Chulantree).